A 104-amino-acid polypeptide reads, in one-letter code: MKVHKGDMVLVISGPDKGAKGQVIAAFPKTEKVLVEGVNRIKKHVANSAPERGAESGGIVTQEAPIHVSNVMVIDSDGNPTRVGYRFDENGKKVRVSRRNGKDI.

A disordered region spans residues arginine 82–isoleucine 104. Over residues lysine 93–isoleucine 104 the composition is skewed to basic residues.

The protein belongs to the universal ribosomal protein uL24 family. As to quaternary structure, part of the 50S ribosomal subunit.

One of two assembly initiator proteins, it binds directly to the 5'-end of the 23S rRNA, where it nucleates assembly of the 50S subunit. Its function is as follows. One of the proteins that surrounds the polypeptide exit tunnel on the outside of the subunit. The chain is Large ribosomal subunit protein uL24 from Corynebacterium glutamicum (strain R).